A 303-amino-acid chain; its full sequence is 5'-3' exonuclease (303 aa).

The 84-residue stretch at 179-262 (ISPAQWVDVK…LATITTEIEA (84 aa)) folds into the 5'-3' exonuclease domain.

In terms of biological role, 5'-3' exonuclease acting preferentially on double-stranded DNA. This chain is 5'-3' exonuclease, found in Halalkalibacterium halodurans (strain ATCC BAA-125 / DSM 18197 / FERM 7344 / JCM 9153 / C-125) (Bacillus halodurans).